A 257-amino-acid chain; its full sequence is 1-(5-phosphoribosyl)-5-[(5-phosphoribosylamino)methylideneamino] imidazole-4-carboxamide isomerase (257 aa).

Residue aspartate 8 is the Proton acceptor of the active site. The active-site Proton donor is aspartate 131.

The protein belongs to the HisA/HisF family.

Its subcellular location is the cytoplasm. It catalyses the reaction 1-(5-phospho-beta-D-ribosyl)-5-[(5-phospho-beta-D-ribosylamino)methylideneamino]imidazole-4-carboxamide = 5-[(5-phospho-1-deoxy-D-ribulos-1-ylimino)methylamino]-1-(5-phospho-beta-D-ribosyl)imidazole-4-carboxamide. It functions in the pathway amino-acid biosynthesis; L-histidine biosynthesis; L-histidine from 5-phospho-alpha-D-ribose 1-diphosphate: step 4/9. The chain is 1-(5-phosphoribosyl)-5-[(5-phosphoribosylamino)methylideneamino] imidazole-4-carboxamide isomerase from Nitrosospira multiformis (strain ATCC 25196 / NCIMB 11849 / C 71).